The chain runs to 440 residues: Thymidine phosphorylase (440 aa).

The protein belongs to the thymidine/pyrimidine-nucleoside phosphorylase family. As to quaternary structure, homodimer.

The catalysed reaction is thymidine + phosphate = 2-deoxy-alpha-D-ribose 1-phosphate + thymine. Its pathway is pyrimidine metabolism; dTMP biosynthesis via salvage pathway; dTMP from thymine: step 1/2. The enzymes which catalyze the reversible phosphorolysis of pyrimidine nucleosides are involved in the degradation of these compounds and in their utilization as carbon and energy sources, or in the rescue of pyrimidine bases for nucleotide synthesis. The chain is Thymidine phosphorylase from Klebsiella pneumoniae subsp. pneumoniae (strain ATCC 700721 / MGH 78578).